We begin with the raw amino-acid sequence, 147 residues long: uncharacterized protein (147 aa).

A run of 4 helical transmembrane segments spans residues leucine 13–leucine 33, leucine 45–leucine 65, tyrosine 80–isoleucine 100, and tryptophan 116–tyrosine 136.

The protein resides in the cell membrane. This is an uncharacterized protein from Methanocaldococcus jannaschii (strain ATCC 43067 / DSM 2661 / JAL-1 / JCM 10045 / NBRC 100440) (Methanococcus jannaschii).